Consider the following 113-residue polypeptide: Endoribonuclease SymE (113 aa).

In terms of domain architecture, SpoVT-AbrB spans 29 to 74; that stretch reads SRYPDYSRIPAITLKGQWLEAAGFATGTVVDVKVMEGCIVLTAQPP.

Belongs to the SymE family.

Its subcellular location is the cytoplasm. In terms of biological role, involved in the degradation and recycling of damaged RNA. It is itself a target for degradation by the ATP-dependent protease Lon. The protein is Endoribonuclease SymE of Escherichia coli (strain 55989 / EAEC).